The following is an 85-amino-acid chain: Glutaredoxin (85 aa).

One can recognise a Glutaredoxin domain in the interval 1–85 (MQTVTMYTGP…EGGLDGLLNP (85 aa)). Cys-12 and Cys-15 are oxidised to a cystine.

The protein belongs to the glutaredoxin family. In terms of assembly, monomer.

The protein localises to the cytoplasm. Its function is as follows. Has a glutathione-disulfide oxidoreductase activity in the presence of NADPH and glutathione reductase. Reduces low molecular weight disulfides and proteins. The polypeptide is Glutaredoxin (grx) (Neisseria meningitidis serogroup A / serotype 4A (strain DSM 15465 / Z2491)).